A 349-amino-acid polypeptide reads, in one-letter code: Phloroglucinol synthase (349 aa).

Residue cysteine 138 is part of the active site.

It belongs to the thiolase-like superfamily. Chalcone/stilbene synthases family.

It carries out the reaction 3 malonyl-CoA + 3 H(+) = 1,3,5-trihydroxybenzene + 3 CO2 + 3 CoA. The protein operates within antibiotic biosynthesis. Functionally, type III polyketide synthase that catalyzes the synthesis of phloroglucinol from three molecules of malonyl-CoA. In addition to its ability to produce phloroglucinol from malonyl-CoA, it exhibits broad substrate specificity, accepting C4-C12 aliphatic acyl-CoAs and phenylacetyl-CoA as the starters to form C6-polyoxoalkylated alpha-pyrones from sequential condensation with malonyl-CoA. The protein is Phloroglucinol synthase of Pseudomonas fluorescens (strain ATCC BAA-477 / NRRL B-23932 / Pf-5).